We begin with the raw amino-acid sequence, 860 residues long: Leucine--tRNA ligase (860 aa).

The 'HIGH' region signature appears at 42–52 (PYPSGRLHMGH). Positions 619-623 (KMSKS) match the 'KMSKS' region motif. An ATP-binding site is contributed by Lys-622.

The protein belongs to the class-I aminoacyl-tRNA synthetase family.

It localises to the cytoplasm. The enzyme catalyses tRNA(Leu) + L-leucine + ATP = L-leucyl-tRNA(Leu) + AMP + diphosphate. This chain is Leucine--tRNA ligase, found in Escherichia coli (strain ATCC 8739 / DSM 1576 / NBRC 3972 / NCIMB 8545 / WDCM 00012 / Crooks).